Consider the following 164-residue polypeptide: MIRKLDDFDIKILDLLQHDATATMAELSEKTGLSANACWRRIRLLEADGVIKNRVTLLDPQKIGLGITVFVCIRCAEHSQDWLDNFLQIVNESPEVIEFYRLAGDIDYLLKLQVASISEYDRLYKKLVSRVKLTDVSAIFSMEELKHSTILPLPETSDKAERKV.

In terms of domain architecture, HTH asnC-type spans 5–66 (LDDFDIKILD…LLDPQKIGLG (62 aa)). A DNA-binding region (H-T-H motif) is located at residues 24–43 (MAELSEKTGLSANACWRRIR).

Represses the secondary, H(+)-coupled glutamate uptake system (Gluemp) genes. The protein is Glutamate uptake regulatory protein (grp) of Zymomonas mobilis subsp. mobilis (strain ATCC 10988 / DSM 424 / LMG 404 / NCIMB 8938 / NRRL B-806 / ZM1).